We begin with the raw amino-acid sequence, 1285 residues long: Peroxidasin homolog pxn-1 (1285 aa).

The N-terminal stretch at 1–20 (MNLYLLLLVIATSSWQFVAG) is a signal peptide. Positions 21–53 (LECPVECTCDKKGLVVDCSSSGLTRIPKNISRN) constitute an LRRNT domain. 7 LRR repeats span residues 27–49 (CTCD…IPKN), 50–72 (ISRN…RSDL), 73–96 (EGFN…ENVL), 97–120 (DHLP…PLCS), 122–143 (SRPL…EQVL), 145–168 (YFPD…KLFD), and 204–227 (KVYC…SALT). Asn-49 carries an N-linked (GlcNAc...) asparagine glycan. One can recognise an LRRCT domain in the interval 180-228 (SNPWHCDCRASKVKALLQKVKWEKKVYCTNPVELRHQALDEVDDSALTC). Asn-248 is a glycosylation site (N-linked (GlcNAc...) asparagine). The segment at 305 to 324 (RQSQHQGNGSPQFTYKPRDN) is disordered. Positions 307–317 (SQHQGNGSPQF) are enriched in polar residues. 2 consecutive Ig-like C2-type domains span residues 315–401 (PQFT…FSLD) and 408–495 (PNIY…AKLT). Disulfide bonds link Cys-336/Cys-385 and Cys-429/Cys-479. A coiled-coil region spans residues 508–550 (QIDEELLRAIAQKARQNVENAVEKTRKQLTQDKVTNTNDLKRL). A glycan (N-linked (GlcNAc...) asparagine) is linked at Asn-595. A disulfide bond links Cys-625 and Cys-641. Asp-719 contributes to the heme b binding site. The Proton acceptor role is filled by His-720. Asp-721 contacts Ca(2+). 2 disulfide bridges follow: Cys-740/Cys-750 and Cys-744/Cys-771. N-linked (GlcNAc...) asparagine glycosylation occurs at Asn-741. Positions 803, 805, 807, and 809 each coordinate Ca(2+). Residue Asn-858 is glycosylated (N-linked (GlcNAc...) asparagine). The heme b site is built by Glu-877 and His-973. LRR repeat units follow at residues 998 to 1022 (HKAF…GLFA) and 1049 to 1073 (VSLD…TEYR). Intrachain disulfides connect Cys-1076–Cys-1133 and Cys-1174–Cys-1201. The LRR 12 repeat unit spans residues 1168-1189 (TLARLFCDNGDNIDRIQKDVFM).

It belongs to the peroxidase family. XPO subfamily. Ca(2+) serves as cofactor. Heme b is required as a cofactor. In terms of tissue distribution, expressed in the ventral nerve cord, the dorsal nerve cord, head neurons, GABAergic and cholinergic neurons, body wall muscles, vulval muscles, uterine muscles, intestine, the hypodermis and in coelomocytes.

It is found in the secreted. It localises to the extracellular space. The protein localises to the extracellular matrix. The catalysed reaction is L-lysyl-[collagen] + L-methionyl-[collagen] + H2O2 = [collagen]-L-lysyl-N-S-L-methionyl-[collagen] + 2 H2O + H(+). It carries out the reaction bromide + H2O2 = hypobromite + H2O. The enzyme catalyses L-lysyl-[collagen] + L-methionyl-[collagen] + hypobromite = [collagen]-L-lysyl-N-S-L-methionyl-[collagen] + bromide + H2O + H(+). It catalyses the reaction L-tyrosyl-[protein] + bromide + H2O2 + H(+) = 3-bromo-L-tyrosyl-[protein] + 2 H2O. The catalysed reaction is hypobromite + L-tyrosyl-[protein] + H(+) = 3-bromo-L-tyrosyl-[protein] + H2O. Its function is as follows. Catalyzes the two-electron oxidation of bromide by hydrogen peroxide and generates hypobromite as a reactive intermediate which mediates the formation of sulfilimine cross-links between methionine and hydroxylysine residues within an uncross-linked collagen IV NC1 hexamer. Plays a role in the attachment of tissues and in axonal guidance during early developmental stages. May functionally antagonize the peroxidasin pxn-2 to maintain neuronal development. This is Peroxidasin homolog pxn-1 from Caenorhabditis elegans.